The following is a 254-amino-acid chain: Segregation and condensation protein A (254 aa).

This sequence belongs to the ScpA family. In terms of assembly, component of a cohesin-like complex composed of ScpA, ScpB and the Smc homodimer, in which ScpA and ScpB bind to the head domain of Smc. The presence of the three proteins is required for the association of the complex with DNA.

The protein localises to the cytoplasm. Functionally, participates in chromosomal partition during cell division. May act via the formation of a condensin-like complex containing Smc and ScpB that pull DNA away from mid-cell into both cell halves. In Brevibacillus brevis (strain 47 / JCM 6285 / NBRC 100599), this protein is Segregation and condensation protein A.